The primary structure comprises 233 residues: Putative nosiheptide resistance regulatory protein (233 aa).

Residues 93-112 (RKAARQAADYSRPMIEQAVA) constitute a DNA-binding region (H-T-H motif). A disordered region spans residues 190–233 (PPEATEVPESGRLTSVDGSAEAVLDPEVQAKEAAEEAAKRDDQA). The segment covering 217–233 (VQAKEAAEEAAKRDDQA) has biased composition (basic and acidic residues).

In terms of biological role, seems to be involved in the regulation of nhs expression. The sequence is that of Putative nosiheptide resistance regulatory protein from Streptomyces actuosus.